Consider the following 257-residue polypeptide: MERSNAATKCGEEPRSGSRRLPKAEGDKSGSAGAPSKNSSRLGGRPCMCTAGRRPNRASGRRRRSCSPAPTWPPLCCYPQSRPTASAAGPGACMRASGRPHGNTTASTAPPRHPRPRRPGGPALRPTPRPCAGPAPPPASRDCRCRRPRRWPRAGRRGRRAGACKPSCAGAAWSARGAPLCSYRTSCAGSCGARTAPTPAPTCASPSAAASSCCRRRRACSSPTTAWSGACGAGPTAATAAQPGKPRSAAAPGRARA.

2 disordered regions span residues 1 to 164 (MERS…AGAC) and 225 to 257 (TAWS…RARA). Basic and acidic residues predominate over residues 10 to 28 (CGEEPRSGSRRLPKAEGDK). Residues 54 to 65 (RPNRASGRRRRS) are compositionally biased toward basic residues. Residues 125–139 (RPTPRPCAGPAPPPA) are compositionally biased toward pro residues. The span at 144-162 (RCRRPRRWPRAGRRGRRAG) shows a compositional bias: basic residues.

This is an uncharacterized protein from Homo sapiens (Human).